The chain runs to 618 residues: GMC oxidoreductase family protein Mala s 12 (618 aa).

Residues 1 to 23 (MKGIVSWAVVSAALVLSATESLA) form the signal peptide. 2 residues coordinate FAD: V129 and V280. H556 functions as the Proton donor in the catalytic mechanism. H599 (proton acceptor) is an active-site residue.

The protein belongs to the GMC oxidoreductase family. In terms of assembly, monomer. The cofactor is FAD.

The protein resides in the secreted. The polypeptide is GMC oxidoreductase family protein Mala s 12 (Malassezia sympodialis (strain ATCC 42132) (Atopic eczema-associated yeast)).